We begin with the raw amino-acid sequence, 190 residues long: Elongation factor P-like protein (190 aa).

Belongs to the elongation factor P family.

This chain is Elongation factor P-like protein, found in Yersinia enterocolitica serotype O:8 / biotype 1B (strain NCTC 13174 / 8081).